Here is a 124-residue protein sequence, read N- to C-terminus: Small ribosomal subunit protein uS12 (124 aa).

At Asp89 the chain carries 3-methylthioaspartic acid.

It belongs to the universal ribosomal protein uS12 family. In terms of assembly, part of the 30S ribosomal subunit. Contacts proteins S8 and S17. May interact with IF1 in the 30S initiation complex.

In terms of biological role, with S4 and S5 plays an important role in translational accuracy. Functionally, interacts with and stabilizes bases of the 16S rRNA that are involved in tRNA selection in the A site and with the mRNA backbone. Located at the interface of the 30S and 50S subunits, it traverses the body of the 30S subunit contacting proteins on the other side and probably holding the rRNA structure together. The combined cluster of proteins S8, S12 and S17 appears to hold together the shoulder and platform of the 30S subunit. This Pectobacterium atrosepticum (strain SCRI 1043 / ATCC BAA-672) (Erwinia carotovora subsp. atroseptica) protein is Small ribosomal subunit protein uS12.